Here is a 793-residue protein sequence, read N- to C-terminus: 3',5'-cyclic-nucleotide phosphodiesterase regA (793 aa).

Residues 1-153 form a disordered region; that stretch reads MNNKQEEIDQ…SSHRVSDFSD (153 aa). Low complexity-rich tracts occupy residues 13–34, 54–69, and 80–121; these read SSTSTSPSPSSSSSPSNNDSTS, NKNNNNNNNNNNSNNN, and NNSS…NNNN. The region spanning 161-280 is the Response regulatory domain; the sequence is RILVADDDDV…LLKKKIDTVL (120 aa). Residue aspartate 212 is modified to 4-aspartylphosphate. In terms of domain architecture, PDEase spans 410–733; that stretch reads RRNSIPTFPQ…ENWQAYMELQ (324 aa). Histidine 487 serves as the catalytic Proton donor. Residues histidine 491, histidine 527, aspartate 528, and aspartate 639 each coordinate a divalent metal cation. Residues 756–793 form a disordered region; the sequence is KLPKIDEEENRDKVSSSSSSSTAPLTSTSSSNNETSSS. Residues 770–793 are compositionally biased toward low complexity; it reads SSSSSSSTAPLTSTSSSNNETSSS.

The protein belongs to the cyclic nucleotide phosphodiesterase family. A divalent metal cation serves as cofactor. In terms of processing, the phosphorelay mechanism involves the sequential transfer of a phosphate group from Asp-212 of pde2 to 'His-65' of rdeA. Phosphorylation of Asp-212 activates the phosphodiesterase domain.

The protein localises to the cytoplasm. The protein resides in the cytosol. The catalysed reaction is 3',5'-cyclic AMP + H2O = AMP + H(+). Inhibited by 3-isobutyl-1-methylxanthine (IBMX). In terms of biological role, phosphodiesterase specific for cAMP. Involved in the degradation of intracellular cAMP. Morphological suppressor of tagB. Phosphorelay protein that accepts phosphate from rdeA or supplies phosphate from regA; depending on the relative concentration of the phosphodonor proteins. This is 3',5'-cyclic-nucleotide phosphodiesterase regA (regA) from Dictyostelium discoideum (Social amoeba).